Here is a 1342-residue protein sequence, read N- to C-terminus: DNA-directed RNA polymerase subunit beta (1342 aa).

The protein belongs to the RNA polymerase beta chain family. The RNAP catalytic core consists of 2 alpha, 1 beta, 1 beta' and 1 omega subunit. When a sigma factor is associated with the core the holoenzyme is formed, which can initiate transcription.

It carries out the reaction RNA(n) + a ribonucleoside 5'-triphosphate = RNA(n+1) + diphosphate. Functionally, DNA-dependent RNA polymerase catalyzes the transcription of DNA into RNA using the four ribonucleoside triphosphates as substrates. This chain is DNA-directed RNA polymerase subunit beta, found in Blochmanniella floridana.